The sequence spans 367 residues: tRNA-specific 2-thiouridylase MnmA (367 aa).

ATP-binding positions include 10–17 and methionine 36; that span reads AMSGGVDS. Cysteine 106 acts as the Nucleophile in catalysis. A disulfide bridge links cysteine 106 with cysteine 204. Residue glycine 130 participates in ATP binding. The tract at residues 154–156 is interaction with tRNA; it reads KDQ. Cysteine 204 (cysteine persulfide intermediate) is an active-site residue. Residues 310–311 form an interaction with tRNA region; sequence RY.

This sequence belongs to the MnmA/TRMU family.

Its subcellular location is the cytoplasm. The catalysed reaction is S-sulfanyl-L-cysteinyl-[protein] + uridine(34) in tRNA + AH2 + ATP = 2-thiouridine(34) in tRNA + L-cysteinyl-[protein] + A + AMP + diphosphate + H(+). Its function is as follows. Catalyzes the 2-thiolation of uridine at the wobble position (U34) of tRNA, leading to the formation of s(2)U34. This Desulforamulus reducens (strain ATCC BAA-1160 / DSM 100696 / MI-1) (Desulfotomaculum reducens) protein is tRNA-specific 2-thiouridylase MnmA.